We begin with the raw amino-acid sequence, 1040 residues long: Multidrug resistance protein MdtB (1040 aa).

12 consecutive transmembrane segments (helical) span residues 25 to 45, 347 to 367, 369 to 389, 396 to 416, 440 to 460, 472 to 492, 537 to 557, 863 to 883, 888 to 908, 910 to 930, 968 to 988, and 998 to 1018; these read LLMAAILLAGIIGYRFLPVAA, LMLAIALVVMIIYLFLRNIPA, IIPGVAVPLSLIGTFAVMVFL, LTLMALTIATGFVVDDAIVVI, IGFTIISLTFSLIAVLIPLLF, FAVTLAVAILISAVVSLTLTP, WLTLSVAFATLLLSVMLWIVI, LGSTVWLIVAAVVAMYIVLGV, FIHPITILSTLPTAGVGALLA, IIAGSELDIIAIIGIILLIGI, ILMTTLAALLGALPLMLSTGV, and IAMVGGLLVSQVLTLFTTPVI.

This sequence belongs to the resistance-nodulation-cell division (RND) (TC 2.A.6) family. MdtB subfamily. Part of a tripartite efflux system composed of MdtA, MdtB and MdtC. MdtB forms a heteromultimer with MdtC.

It localises to the cell inner membrane. The chain is Multidrug resistance protein MdtB from Salmonella choleraesuis (strain SC-B67).